A 123-amino-acid polypeptide reads, in one-letter code: Protein HesB, vegetative (123 aa).

Belongs to the HesB/IscA family.

May be required for efficient nitrogen fixation. This is Protein HesB, vegetative (hesB2) from Trichormus variabilis (strain ATCC 29413 / PCC 7937) (Anabaena variabilis).